The sequence spans 421 residues: Histidine--tRNA ligase (421 aa).

It belongs to the class-II aminoacyl-tRNA synthetase family. As to quaternary structure, homodimer.

It is found in the cytoplasm. It carries out the reaction tRNA(His) + L-histidine + ATP = L-histidyl-tRNA(His) + AMP + diphosphate + H(+). The polypeptide is Histidine--tRNA ligase (Caldicellulosiruptor bescii (strain ATCC BAA-1888 / DSM 6725 / KCTC 15123 / Z-1320) (Anaerocellum thermophilum)).